The sequence spans 1124 residues: ATP-dependent DNA helicase mph1 (1124 aa).

Disordered regions lie at residues 1 to 103 (MFTL…EARS) and 123 to 302 (QLTQ…PTQH). Composition is skewed to acidic residues over residues 7–17 (DSSDYFDDDLG) and 169–178 (RDDEYDDDEE). Over residues 210–222 (TPIIGQQSTTIEA) the composition is skewed to polar residues. Positions 226 to 236 (LLDDIPDDAFD) are enriched in acidic residues. The span at 255-271 (SFTQSTNRPLGVRQTTL) shows a compositional bias: polar residues. The Helicase ATP-binding domain occupies 328–496 (IAQKGLFHNL…AVIDGLDISR (169 aa)). 341 to 348 (LPTGLGKT) contributes to the ATP binding site. The DEAH box signature appears at 444–447 (DEAH). Positions 666–840 (YLKQVVLNHF…GTRFTFHDDM (175 aa)) constitute a Helicase C-terminal domain. Basic and acidic residues predominate over residues 855–873 (KRAIDIPEENTVRDLPEPK). 2 disordered regions span residues 855 to 923 (KRAI…TPEP) and 1016 to 1124 (MPKA…DSDD). Composition is skewed to basic residues over residues 874–886 (RRGRAPKRPPKKF) and 906–916 (SKRRVPNKSKA).

This sequence belongs to the DEAD box helicase family. DEAH subfamily. FANCM sub-subfamily. As to quaternary structure, interacts with the MHF histone-fold complex to form the FANCM-MHF complex.

It localises to the nucleus. The catalysed reaction is ATP + H2O = ADP + phosphate + H(+). ATP-dependent DNA helicase involved in DNA damage repair by homologous recombination and in genome maintenance. Capable of unwinding D-loops. Plays a role in limiting crossover recombinants during mitotic DNA double-strand break (DSB) repair. Component of a FANCM-MHF complex which promotes gene conversion at blocked replication forks, probably by reversal of the stalled fork. In Aspergillus niger (strain ATCC MYA-4892 / CBS 513.88 / FGSC A1513), this protein is ATP-dependent DNA helicase mph1.